The following is a 494-amino-acid chain: Acetyl-coenzyme A carboxylase carboxyl transferase subunit beta, chloroplastic (494 aa).

Positions 226–494 (LWVQCENCYG…VPLNQNETEH (269 aa)) constitute a CoA carboxyltransferase N-terminal domain. Residues C230, C233, C249, and C252 each coordinate Zn(2+). The C4-type zinc-finger motif lies at 230 to 252 (CENCYGLNYKKFLKSKMNICEQC).

The protein belongs to the AccD/PCCB family. In terms of assembly, acetyl-CoA carboxylase is a heterohexamer composed of biotin carboxyl carrier protein, biotin carboxylase and 2 subunits each of ACCase subunit alpha and ACCase plastid-coded subunit beta (accD). Zn(2+) is required as a cofactor.

It localises to the plastid. Its subcellular location is the chloroplast stroma. The catalysed reaction is N(6)-carboxybiotinyl-L-lysyl-[protein] + acetyl-CoA = N(6)-biotinyl-L-lysyl-[protein] + malonyl-CoA. It participates in lipid metabolism; malonyl-CoA biosynthesis; malonyl-CoA from acetyl-CoA: step 1/1. In terms of biological role, component of the acetyl coenzyme A carboxylase (ACC) complex. Biotin carboxylase (BC) catalyzes the carboxylation of biotin on its carrier protein (BCCP) and then the CO(2) group is transferred by the transcarboxylase to acetyl-CoA to form malonyl-CoA. This chain is Acetyl-coenzyme A carboxylase carboxyl transferase subunit beta, chloroplastic, found in Coffea arabica (Arabian coffee).